Here is an 88-residue protein sequence, read N- to C-terminus: Small ribosomal subunit protein bS16 (88 aa).

The protein belongs to the bacterial ribosomal protein bS16 family.

This is Small ribosomal subunit protein bS16 from Buchnera aphidicola subsp. Cinara cedri (strain Cc).